The following is a 620-amino-acid chain: MDSHTLVQALIYLGSAALIVPIAVRLGLGSVLGYLIAGCIIGPWGLRLVTDAESILHFAEIGVVLMLFIIGLELDPQRLWKLRAAVFGGGALQMVICGGLLGLFCMLLGLRWQVAELIGMTLALSSTAIAMQAMNERNLMVTQMGRSAFAVLLFQDIAAIPLVAMIPLLAASSASTTMGAFALSALKVAGALVLVVLLGRYVTRPALRFVARSGLREVFSAVALFLVFGFGLLLEEVGLSMAMGAFLAGVLLASSEYRHALESDIEPFKGLLLGLFFIGVGMSIDFGTLIENPLRIVILLLGFLIIKIAMLWLIARPLQVPNKQRRWFAVLLGQGSEFAFVVFGAAQMANVLEPEWAKSLTLAVALSMAATPILLVILNRLEQSSTEEAREADEIDEEQPRVIIAGFGRFGQITGRLLLSSGVKMVVLDHDPDHIETLRKFGMKVFYGDATRMDLLESAGAAKAEVLINAIDDPQTNLQLTEMVKEHFPHLQIIARARDVDHYIRLRQAGVEKPERETFEGALKTGRLALESLGLGPYEARERADVFRRFNIQMVEEMAMVENDTKARAAVYKRTSAMLSEIITEDREHLSLIQRHGWQGTEEGKHTGNMADEPETKPSS.

Topologically, residues 1–3 (MDS) are periplasmic. A helical membrane pass occupies residues 4–24 (HTLVQALIYLGSAALIVPIAV). Residue arginine 25 is a topological domain, cytoplasmic. Residues 26–46 (LGLGSVLGYLIAGCIIGPWGL) traverse the membrane as a helical segment. The Periplasmic segment spans residues 47 to 53 (RLVTDAE). The chain crosses the membrane as a helical span at residues 54-74 (SILHFAEIGVVLMLFIIGLEL). The Cytoplasmic portion of the chain corresponds to 75-89 (DPQRLWKLRAAVFGG). The chain crosses the membrane as a helical span at residues 90–110 (GALQMVICGGLLGLFCMLLGL). Residues 111 to 113 (RWQ) are Periplasmic-facing. The helical transmembrane segment at 114–134 (VAELIGMTLALSSTAIAMQAM) threads the bilayer. At 135–148 (NERNLMVTQMGRSA) the chain is on the cytoplasmic side. A helical transmembrane segment spans residues 149 to 169 (FAVLLFQDIAAIPLVAMIPLL). The Periplasmic segment spans residues 170–177 (AASSASTT). The helical transmembrane segment at 178–198 (MGAFALSALKVAGALVLVVLL) threads the bilayer. The Cytoplasmic portion of the chain corresponds to 199-213 (GRYVTRPALRFVARS). The chain crosses the membrane as a helical span at residues 214–233 (GLREVFSAVALFLVFGFGLL). The Periplasmic segment spans residues 234–236 (LEE). A helical transmembrane segment spans residues 237–254 (VGLSMAMGAFLAGVLLAS). The Cytoplasmic segment spans residues 255–269 (SEYRHALESDIEPFK). The chain crosses the membrane as a helical span at residues 270-290 (GLLLGLFFIGVGMSIDFGTLI). Topologically, residues 291-293 (ENP) are periplasmic. Residues 294–314 (LRIVILLLGFLIIKIAMLWLI) traverse the membrane as a helical segment. The Cytoplasmic portion of the chain corresponds to 315–326 (ARPLQVPNKQRR). Residues 327–347 (WFAVLLGQGSEFAFVVFGAAQ) form a helical membrane-spanning segment. At 348-358 (MANVLEPEWAK) the chain is on the periplasmic side. The chain crosses the membrane as a helical span at residues 359–379 (SLTLAVALSMAATPILLVILN). The Cytoplasmic segment spans residues 380–620 (RLEQSSTEEA…ADEPETKPSS (241 aa)). The RCK N-terminal domain occupies 399-518 (QPRVIIAGFG…AGVEKPERET (120 aa)). Residues 597 to 620 (GWQGTEEGKHTGNMADEPETKPSS) are disordered.

This sequence belongs to the monovalent cation:proton antiporter 2 (CPA2) transporter (TC 2.A.37) family. KefC subfamily. As to quaternary structure, homodimer. Interacts with the regulatory subunit KefF.

The protein localises to the cell inner membrane. Pore-forming subunit of a potassium efflux system that confers protection against electrophiles. Catalyzes K(+)/H(+) antiport. The chain is Glutathione-regulated potassium-efflux system protein KefC from Shigella flexneri.